The chain runs to 546 residues: Chaperonin GroEL (546 aa).

Residues 30 to 33, K51, 87 to 91, G415, 479 to 481, and D495 each bind ATP; these read TLGP, DGTTT, and NAA. The interval 526 to 546 is disordered; sequence KKDEPAMPAGGGMGGMGGMDF. Over residues 534–546 the composition is skewed to gly residues; the sequence is AGGGMGGMGGMDF.

The protein belongs to the chaperonin (HSP60) family. In terms of assembly, forms a cylinder of 14 subunits composed of two heptameric rings stacked back-to-back. Interacts with the co-chaperonin GroES.

The protein resides in the cytoplasm. It carries out the reaction ATP + H2O + a folded polypeptide = ADP + phosphate + an unfolded polypeptide.. In terms of biological role, together with its co-chaperonin GroES, plays an essential role in assisting protein folding. The GroEL-GroES system forms a nano-cage that allows encapsulation of the non-native substrate proteins and provides a physical environment optimized to promote and accelerate protein folding. In Xanthomonas euvesicatoria pv. vesicatoria (strain 85-10) (Xanthomonas campestris pv. vesicatoria), this protein is Chaperonin GroEL.